A 138-amino-acid chain; its full sequence is Large ribosomal subunit protein bL17 (138 aa).

This sequence belongs to the bacterial ribosomal protein bL17 family. In terms of assembly, part of the 50S ribosomal subunit. Contacts protein L32.

The chain is Large ribosomal subunit protein bL17 from Buchnera aphidicola subsp. Schizaphis graminum (strain Sg).